A 238-amino-acid chain; its full sequence is MRPSGRKTDQMRKVSFERNFSKHAEGSCLVKFGDTHVLCTASLEEKTPPWLRNSGKGWVTAEYGMLPRATGERMKREAASGKQGGRTQEIQRLIGRSLRAVVDLKELGERQITIDCDVIQADGGTRTASITGAWIALYDCLKWMESRNMIKVERVLKDHIAAISCGIFASQPVIDLDYLEDSSAETDANFVMTGKGGIVEIQGTAEGTPFSEEEFTTLMHLAKNGIAELVELQKQAIA.

Phosphate-binding positions include Arg-86 and 124-126; that span reads GTR.

Belongs to the RNase PH family. In terms of assembly, homohexameric ring arranged as a trimer of dimers.

The enzyme catalyses tRNA(n+1) + phosphate = tRNA(n) + a ribonucleoside 5'-diphosphate. Phosphorolytic 3'-5' exoribonuclease that plays an important role in tRNA 3'-end maturation. Removes nucleotide residues following the 3'-CCA terminus of tRNAs; can also add nucleotides to the ends of RNA molecules by using nucleoside diphosphates as substrates, but this may not be physiologically important. Probably plays a role in initiation of 16S rRNA degradation (leading to ribosome degradation) during starvation. The protein is Ribonuclease PH of Rhizobium rhizogenes (strain K84 / ATCC BAA-868) (Agrobacterium radiobacter).